A 913-amino-acid chain; its full sequence is DNA repair endonuclease XPF (913 aa).

A helicase-like region spans residues 1 to 454 (MDRGISAVRK…EVWVNLRKGD (454 aa)). Leucine-zipper regions lie at residues 233-254 (LNAC…DLSL) and 270-298 (LDPL…LQYL). Lys-289 carries the post-translational modification N6-acetyllysine. The span at 453 to 476 (GDGPKRTMKSDKRPKDTKNKERAS) shows a compositional bias: basic and acidic residues. 2 disordered regions span residues 453–525 (GDGP…CGGE) and 638–677 (VVPE…HNGT). The Nuclear localization signal signature appears at 483 to 488 (KRKKRE). Residues 500-509 (EPPEEGAAEE) are compositionally biased toward acidic residues. Ser-518 is modified (phosphoserine). A compositionally biased stretch (basic and acidic residues) spans 638–649 (VVPEEREGRDET). A nuclease region spans residues 655–810 (RGTVSTDAPA…PSPHATAELF (156 aa)). Positions 680-760 (SIVVDMREFR…RPVLLIEFDA (81 aa)) constitute an ERCC4 domain. The hhH2, dimerization with ERCC1 stretch occupies residues 834–902 (TLPESDKYNP…QLYDFLHTAY (69 aa)).

Belongs to the XPF family. As to quaternary structure, heterodimer composed of ERCC1 and ERCC4/XPF. Interacts with SLX4/BTBD12; this interaction is direct and links the ERCC1-ERCC4/XPF complex to SLX4, which may coordinate the action of the structure-specific endonuclease during DNA repair. Requires Mg(2+) as cofactor.

It localises to the nucleus. It is found in the chromosome. Functionally, catalytic component of a structure-specific DNA repair endonuclease responsible for the 5-prime incision during DNA repair, and which is essential for nucleotide excision repair (NER) and interstrand cross-link (ICL) repair. This is DNA repair endonuclease XPF from Cricetulus griseus (Chinese hamster).